A 127-amino-acid polypeptide reads, in one-letter code: Protein HI_1253 (127 aa).

The next 4 membrane-spanning stretches (helical) occupy residues 13-33 (VIML…LLVI), 61-81 (LIVS…WWLV), 82-102 (AKFA…SKKV), and 107-127 (SIFF…AYLK).

It belongs to the SirB2 family.

The protein resides in the cell inner membrane. In Haemophilus influenzae (strain ATCC 51907 / DSM 11121 / KW20 / Rd), this protein is Protein HI_1253.